Consider the following 264-residue polypeptide: 3-methyl-2-oxobutanoate hydroxymethyltransferase (264 aa).

Asp-45 and Asp-84 together coordinate Mg(2+). 3-methyl-2-oxobutanoate-binding positions include 45-46 (DS), Asp-84, and Lys-112. Glu-114 contributes to the Mg(2+) binding site. Glu-181 acts as the Proton acceptor in catalysis.

Belongs to the PanB family. Homodecamer; pentamer of dimers. The cofactor is Mg(2+).

Its subcellular location is the cytoplasm. The catalysed reaction is 3-methyl-2-oxobutanoate + (6R)-5,10-methylene-5,6,7,8-tetrahydrofolate + H2O = 2-dehydropantoate + (6S)-5,6,7,8-tetrahydrofolate. Its pathway is cofactor biosynthesis; (R)-pantothenate biosynthesis; (R)-pantoate from 3-methyl-2-oxobutanoate: step 1/2. Its function is as follows. Catalyzes the reversible reaction in which hydroxymethyl group from 5,10-methylenetetrahydrofolate is transferred onto alpha-ketoisovalerate to form ketopantoate. This Shigella dysenteriae serotype 1 (strain Sd197) protein is 3-methyl-2-oxobutanoate hydroxymethyltransferase.